We begin with the raw amino-acid sequence, 494 residues long: Ribose import ATP-binding protein RbsA (494 aa).

ABC transporter domains lie at 3-240 and 250-494; these read IEMK…VGRS and SQIS…TGGE. 35 to 42 contacts ATP; the sequence is GENGAGKS.

This sequence belongs to the ABC transporter superfamily. Ribose importer (TC 3.A.1.2.1) family. As to quaternary structure, the complex is composed of an ATP-binding protein (RbsA), two transmembrane proteins (RbsC) and a solute-binding protein (RbsB).

The protein localises to the cell membrane. It carries out the reaction D-ribose(out) + ATP + H2O = D-ribose(in) + ADP + phosphate + H(+). Its function is as follows. Part of the ABC transporter complex RbsABC involved in ribose import. Responsible for energy coupling to the transport system. The polypeptide is Ribose import ATP-binding protein RbsA (Bacillus cereus (strain ZK / E33L)).